The following is a 35-amino-acid chain: Photosystem II reaction center protein T (35 aa).

Residues A3–F23 form a helical membrane-spanning segment.

It belongs to the PsbT family. In terms of assembly, PSII is composed of 1 copy each of membrane proteins PsbA, PsbB, PsbC, PsbD, PsbE, PsbF, PsbH, PsbI, PsbJ, PsbK, PsbL, PsbM, PsbT, PsbY, PsbZ, Psb30/Ycf12, at least 3 peripheral proteins of the oxygen-evolving complex and a large number of cofactors. It forms dimeric complexes.

Its subcellular location is the plastid. The protein resides in the chloroplast thylakoid membrane. Its function is as follows. Found at the monomer-monomer interface of the photosystem II (PS II) dimer, plays a role in assembly and dimerization of PSII. PSII is a light-driven water plastoquinone oxidoreductase, using light energy to abstract electrons from H(2)O, generating a proton gradient subsequently used for ATP formation. The chain is Photosystem II reaction center protein T from Cunninghamia lanceolata (China fir).